Here is a 419-residue protein sequence, read N- to C-terminus: Synaptosomal-associated protein 47 (419 aa).

T-SNARE coiled-coil homology domains lie at 108–170 and 356–418; these read PQGA…LSEL and VLQP…MRKL.

This sequence belongs to the SVAP1 family.

Its function is as follows. May play a role in intracellular membrane fusion. This is Synaptosomal-associated protein 47 (snap47) from Danio rerio (Zebrafish).